The sequence spans 118 residues: Large ribosomal subunit protein bL20c (118 aa).

The protein belongs to the bacterial ribosomal protein bL20 family.

The protein localises to the plastid. Binds directly to 23S ribosomal RNA and is necessary for the in vitro assembly process of the 50S ribosomal subunit. It is not involved in the protein synthesizing functions of that subunit. In Aneura mirabilis (Parasitic liverwort), this protein is Large ribosomal subunit protein bL20c.